The chain runs to 948 residues: Isoleucine--tRNA ligase (948 aa).

Positions 58 to 68 match the 'HIGH' region motif; that stretch reads PYANGSIHIGH. Glutamate 572 contributes to the L-isoleucyl-5'-AMP binding site. The short motif at 613–617 is the 'KMSKS' region element; the sequence is KMSKS. Lysine 616 is a binding site for ATP. Residues cysteine 911, cysteine 914, cysteine 931, and cysteine 934 each contribute to the Zn(2+) site.

It belongs to the class-I aminoacyl-tRNA synthetase family. IleS type 1 subfamily. As to quaternary structure, monomer. It depends on Zn(2+) as a cofactor.

It is found in the cytoplasm. It catalyses the reaction tRNA(Ile) + L-isoleucine + ATP = L-isoleucyl-tRNA(Ile) + AMP + diphosphate. Catalyzes the attachment of isoleucine to tRNA(Ile). As IleRS can inadvertently accommodate and process structurally similar amino acids such as valine, to avoid such errors it has two additional distinct tRNA(Ile)-dependent editing activities. One activity is designated as 'pretransfer' editing and involves the hydrolysis of activated Val-AMP. The other activity is designated 'posttransfer' editing and involves deacylation of mischarged Val-tRNA(Ile). In Edwardsiella ictaluri (strain 93-146), this protein is Isoleucine--tRNA ligase.